The chain runs to 635 residues: MGNGNSREAKESRRSRLRHKLQKFRIHRRHLRSSRNSAGMVIQRTVSAEDFSGIALLTLIGAEMKFKDKWLACVSFGEQTFRTEISDTTQKPIWNSEKKLLLEKNGPSLARVSVFETNRVARNKIIGYCELDIFDFVVQEPESTCKSFNLLDPTSSNVVGSIFLSCAIEDPVETERRFAKRILSIVDYNEDGQLSFSEFSDLIKAFGNLVAANKKEELFKAADLNGDGVVTIDELAALLALQQEQEPIINNCPVCGEALQVSDKLNAMIHMTLCFDEGTGNQVMTGGFLTDRQASYGWMFKLSEWTHLSTYDVGLNTGSSASYIVVIDRKSKRLVEELIDSKIVLSMRAIYQSKIGLRLMDQGAKEILQRLSEKQGKKMSSVESAQKIPRFLEFFKDQINMAEVKYPLQHFKTFNEFFIRELKPGARPIACMNRNDVAVCAADCRLMAFQSVEDSTRFWIKGKKFSIRGLLGKNVNPNAFLDGSLVIFRLAPQDYHRFHVPVSGVIEQFVDVSGSLYTVNPIAVNSKYCNVFTENKRTVAIISTAEFGKVAFVAIGATMVGSINFVRKEGEHVKKGDELGYFSFGGSTVICVFEKDAIGIDNDLLVNSGRSLETLVSVGMQLGVSTRTFARSTLI.

The region spanning 20–146 is the C2 domain; that stretch reads KLQKFRIHRR…VVQEPESTCK (127 aa). 2 consecutive EF-hand domains span residues 174–209 and 210–245; these read TERRFAKRILSIVDYNEDGQLSFSEFSDLIKAFGNL and VAANKKEELFKAADLNGDGVVTIDELAALLALQQEQ. The Ca(2+) site is built by aspartate 187, asparagine 189, aspartate 191, glutamine 193, glutamate 198, aspartate 223, asparagine 225, aspartate 227, and glutamate 234. Catalysis depends on charge relay system; for autoendoproteolytic cleavage activity residues aspartate 443, histidine 499, and serine 587. Catalysis depends on serine 587, which acts as the Schiff-base intermediate with substrate; via pyruvic acid; for decarboxylase activity. A Pyruvic acid (Ser); by autocatalysis modification is found at serine 587.

This sequence belongs to the phosphatidylserine decarboxylase family. PSD-B subfamily. Eukaryotic type II sub-subfamily. In terms of assembly, heterodimer of a large membrane-associated beta subunit and a small pyruvoyl-containing alpha subunit. Pyruvate serves as cofactor. Is synthesized initially as an inactive proenzyme. Formation of the active enzyme involves a self-maturation process in which the active site pyruvoyl group is generated from an internal serine residue via an autocatalytic post-translational modification. Two non-identical subunits are generated from the proenzyme in this reaction, and the pyruvate is formed at the N-terminus of the alpha chain, which is derived from the carboxyl end of the proenzyme. The autoendoproteolytic cleavage occurs by a canonical serine protease mechanism, in which the side chain hydroxyl group of the serine supplies its oxygen atom to form the C-terminus of the beta chain, while the remainder of the serine residue undergoes an oxidative deamination to produce ammonia and the pyruvoyl prosthetic group on the alpha chain. During this reaction, the Ser that is part of the protease active site of the proenzyme becomes the pyruvoyl prosthetic group, which constitutes an essential element of the active site of the mature decarboxylase. In terms of tissue distribution, highly expressed in flowers and at lower levels in leaves.

The protein resides in the vacuole membrane. It carries out the reaction a 1,2-diacyl-sn-glycero-3-phospho-L-serine + H(+) = a 1,2-diacyl-sn-glycero-3-phosphoethanolamine + CO2. The protein operates within phospholipid metabolism; phosphatidylethanolamine biosynthesis; phosphatidylethanolamine from CDP-diacylglycerol: step 2/2. Catalyzes the formation of phosphatidylethanolamine (PtdEtn) from phosphatidylserine (PtdSer). Plays a central role in phospholipid metabolism and in the interorganelle trafficking of phosphatidylserine. Contributes only to a minor proportion of PtdEtn production. The sequence is that of Phosphatidylserine decarboxylase proenzyme 2 (PSD2) from Arabidopsis thaliana (Mouse-ear cress).